The chain runs to 159 residues: uncharacterized protein (159 aa).

The segment at 9-36 (VTSGNKEKKKKRSSAGLTGHAPPAADSS) is disordered.

This is an uncharacterized protein from Caenorhabditis elegans.